The sequence spans 422 residues: uncharacterized protein (422 aa).

Belongs to the asfivirus K421R family.

Its subcellular location is the virion. This is an uncharacterized protein from Ornithodoros (relapsing fever ticks).